The chain runs to 309 residues: Homoserine O-acetyltransferase (309 aa).

The active-site Acyl-thioester intermediate is Cys142. Substrate is bound by residues Lys163 and Ser192. His235 functions as the Proton acceptor in the catalytic mechanism. Residue Glu237 is part of the active site. Arg249 serves as a coordination point for substrate.

This sequence belongs to the MetA family.

It is found in the cytoplasm. The enzyme catalyses L-homoserine + acetyl-CoA = O-acetyl-L-homoserine + CoA. The protein operates within amino-acid biosynthesis; L-methionine biosynthesis via de novo pathway; O-acetyl-L-homoserine from L-homoserine: step 1/1. Transfers an acetyl group from acetyl-CoA to L-homoserine, forming acetyl-L-homoserine. This is Homoserine O-acetyltransferase from Methanomethylophilus alvi (strain Mx1201).